A 1185-amino-acid chain; its full sequence is MPVSLAVCETANVVNAALRESLGGGGGSGCVAAAAASGRSGSGSSSTAAAAASADEAKIGDPSATDNLQSQIVANAKRVLLAKIEYEEVENYHESVLAKLKSKYIVIKPDNSGAANCSYKTNGASTGKALSSNGHDNTNGVNGSSAATVNGNRKQTVEQSNQNSTTNPNELPKPKRVLYPRENIRIGWKQSDRKWQVGAGMLNVGNTCYLNSTLQALFHIPALANWLVSETAHVENCNISESCGSGGCIICAMAKTLQTTQSNQTAVRPFLIYTKLRQICKHMVVGRQEDAHEFLRFLVEAMEKAYLMRFRNYKELDQLVKETTPLSQIFGGYLRSEVRCLSCNHVSITFQHFQDLLLDIRKADTLEEAFDGYFSRERLEDMGYKCEGCKKKVSATKQFSLERAPITLCIQLKRFSMMGNKLTKQISFKPRIDLSRFAARSPAASTQPLSYRLVSMVTHLGVSQHCGHYTAIGLTESGSYYNFDDSYVRPIAMQSVCNTNAYIMFYELDVASSSINSSSSCSTSVPKLNGLRLNGQHSPSVATTAVAATATSTSASAVSPRFIGPQLPNGYANNNGHVLGAAKTSIQFKSSPQKQPQQQQHNGLLMGANKFQESAQSKHSLVGSLHKGETAANASANAISNANSNKSSCNNNTLTTNSQHQQQHILPISSDEEDEDEDSDDDVDVKANTAPQLPSMPKMFEDAESVAQTAKLKPKTPLKSLVPYESASEEEQEQQQQQQQLLVSPQLQPANPRKRRSGADSSESEDEPPSIMRNGHAKSNGSGNESSTSTSIKSNNNKQKTDAIDEIFKSLNNYKNKHRATAAGTTTADADEDEQQQQQVTKKPSNSSSSLISKNGWQSQNGKAPASPKTPPSPAVIKSKTGIWQITRTDDDNDDDDEDADEEDDADADAEQEEYDDEVVVVETTPSITTKNLNNPFASKPSSADAMPGAKRQKLLNGSAKSAQTPRVGNGYQSEATANGNAVSELLKQTHRGYGTSVLSWTGKTSDLDKQSFDLVCAKRIAGYGDMDGSVGVSSDSNINNSKNIDSNSNIKSLTAPTLLAEAREQRKRDAEDDEENEMDRGRQRKVKSASVKSNNGIPGYNPFQEFESQKRWNGNKSGSFPRFYQNYRQNFQQRNKFKYNRFGGGGAKFQQQRALQRHLAAGGGFTRRQHQSTGHQQQQQQQQS.

Residues threonine 126 to asparagine 169 are compositionally biased toward polar residues. The tract at residues threonine 126–proline 174 is disordered. In terms of domain architecture, USP spans alanine 199–aspartate 509. Cysteine 208 (nucleophile) is an active-site residue. Catalysis depends on histidine 468, which acts as the Proton acceptor. A phosphoserine mark is found at serine 552 and serine 554. Residues alanine 642 to serine 658 show a composition bias toward low complexity. 4 disordered regions span residues alanine 642 to isoleucine 804, histidine 818 to glutamate 975, alanine 1056 to proline 1122, and asparagine 1136 to serine 1185. The span at serine 670–valine 683 shows a compositional bias: acidic residues. Threonine 716 carries the phosphothreonine modification. Serine 726 and serine 728 each carry phosphoserine. 2 stretches are compositionally biased toward low complexity: residues lysine 778–asparagine 797 and glutamine 836–serine 853. Serine 867 is subject to Phosphoserine. A Phosphothreonine modification is found at threonine 870. Serine 873 bears the Phosphoserine mark. Positions aspartate 891–valine 920 are enriched in acidic residues. Polar residues-rich tracts occupy residues threonine 924–serine 942 and serine 959–glutamate 975. Threonine 925 is modified (phosphothreonine). Positions glutamate 1062–alanine 1071 are enriched in basic and acidic residues. Low complexity-rich tracts occupy residues glutamine 1151–alanine 1161 and glutamine 1172–serine 1185.

The protein belongs to the peptidase C19 family. In terms of assembly, interacts with atms/PAF1, but not with CycT.

Its subcellular location is the nucleus. The protein localises to the nucleolus. The enzyme catalyses Thiol-dependent hydrolysis of ester, thioester, amide, peptide and isopeptide bonds formed by the C-terminal Gly of ubiquitin (a 76-residue protein attached to proteins as an intracellular targeting signal).. Functionally, required for maintaining multiple types of adult stem cells, including male and female germline, epithelial follicle cell and intestinal stem cells. May function as a transcriptional repressor by continually deubiquiting histone H2B at the promoters of genes critical for cellular differentiation, thereby preventing histone H3 'Lys-4' trimethylation (H3K4). Controls selective autophagy activation by ubiquitinated proteins. In Drosophila mojavensis (Fruit fly), this protein is Ubiquitin carboxyl-terminal hydrolase 36 (Usp36).